The following is a 184-amino-acid chain: Peptide deformylase 2 (184 aa).

Fe cation contacts are provided by Cys-110 and His-153. Residue Glu-154 is part of the active site. Position 157 (His-157) interacts with Fe cation.

The protein belongs to the polypeptide deformylase family. Fe(2+) is required as a cofactor.

It catalyses the reaction N-terminal N-formyl-L-methionyl-[peptide] + H2O = N-terminal L-methionyl-[peptide] + formate. Functionally, removes the formyl group from the N-terminal Met of newly synthesized proteins. Requires at least a dipeptide for an efficient rate of reaction. N-terminal L-methionine is a prerequisite for activity but the enzyme has broad specificity at other positions. In Bacillus subtilis (strain 168), this protein is Peptide deformylase 2 (defB).